The primary structure comprises 253 residues: Trans-aconitate 2-methyltransferase (253 aa).

It belongs to the methyltransferase superfamily. Tam family.

It is found in the cytoplasm. The catalysed reaction is trans-aconitate + S-adenosyl-L-methionine = (E)-3-(methoxycarbonyl)pent-2-enedioate + S-adenosyl-L-homocysteine. Catalyzes the S-adenosylmethionine monomethyl esterification of trans-aconitate. This is Trans-aconitate 2-methyltransferase from Azoarcus sp. (strain BH72).